The chain runs to 362 residues: Homoisocitrate dehydrogenase (362 aa).

79-81 contacts NADH; the sequence is VQS. Ser-81 is a (2R,3S)-homoisocitrate binding site. Residues Ser-81 and Ser-91 each carry the phosphoserine modification. The (2R,3S)-homoisocitrate site is built by Arg-97, Arg-107, Arg-126, Tyr-133, Lys-196, and Asn-198. Residue Asn-198 coordinates NADH. Asp-232, Asp-256, and Asp-260 together coordinate Mg(2+). Residues 289 to 293 and Asn-301 each bind NADH; that span reads GSAPD.

This sequence belongs to the isocitrate and isopropylmalate dehydrogenases family. Mg(2+) serves as cofactor.

Its subcellular location is the cytoplasm. The catalysed reaction is (2R,3S)-homoisocitrate + NAD(+) = 2-oxoadipate + CO2 + NADH. It functions in the pathway amino-acid biosynthesis; L-lysine biosynthesis via AAA pathway; L-alpha-aminoadipate from 2-oxoglutarate: step 4/5. In Schizosaccharomyces pombe (strain 972 / ATCC 24843) (Fission yeast), this protein is Homoisocitrate dehydrogenase (lys12).